A 311-amino-acid polypeptide reads, in one-letter code: MAAENSSFVTQFILAGLTDQPGVQIPLFFLFLGFYVVTVVGNLGLITLIRLNSHLHTPMYFFLYNLSFIDFCYSSVITPKMLMSFVLKKNSISYAGCMTQLFFFLFFVVSESFILSAMAYDRYVAICNPLLYMVTMSPQVCFLLLLGVYGMGFAGAMAHTACMMGVTFCANNLVNHYMCDILPLLECACTSTYVNELVVFVVVGIDIGVPTVTIFISYALILSSIFHIDSTEGRSKAFSTCSSHIIAVSLFFGSGAFMYLKPFSLLAMNQGKVSSLFYTTVVPMLNPLIYSLRNKDVKVALKKILNKNAFS.

Over 1 to 25 the chain is Extracellular; sequence MAAENSSFVTQFILAGLTDQPGVQI. N5 carries N-linked (GlcNAc...) asparagine glycosylation. A helical transmembrane segment spans residues 26 to 46; sequence PLFFLFLGFYVVTVVGNLGLI. Topologically, residues 47–54 are cytoplasmic; it reads TLIRLNSH. A helical membrane pass occupies residues 55–75; the sequence is LHTPMYFFLYNLSFIDFCYSS. Over 76–99 the chain is Extracellular; the sequence is VITPKMLMSFVLKKNSISYAGCMT. The cysteines at positions 97 and 189 are disulfide-linked. A helical membrane pass occupies residues 100-120; the sequence is QLFFFLFFVVSESFILSAMAY. The Cytoplasmic segment spans residues 121–139; it reads DRYVAICNPLLYMVTMSPQ. A helical transmembrane segment spans residues 140–160; it reads VCFLLLLGVYGMGFAGAMAHT. Over 161–197 the chain is Extracellular; the sequence is ACMMGVTFCANNLVNHYMCDILPLLECACTSTYVNEL. Residues 198-217 traverse the membrane as a helical segment; that stretch reads VVFVVVGIDIGVPTVTIFIS. At 218 to 237 the chain is on the cytoplasmic side; sequence YALILSSIFHIDSTEGRSKA. A helical transmembrane segment spans residues 238-258; sequence FSTCSSHIIAVSLFFGSGAFM. Topologically, residues 259 to 271 are extracellular; it reads YLKPFSLLAMNQG. Residues 272–292 form a helical membrane-spanning segment; it reads KVSSLFYTTVVPMLNPLIYSL. The Cytoplasmic segment spans residues 293–311; it reads RNKDVKVALKKILNKNAFS.

Belongs to the G-protein coupled receptor 1 family. In terms of tissue distribution, expressed in the tongue and testis.

Its subcellular location is the cell membrane. Functionally, odorant receptor (Potential). May be involved in taste perception. The chain is Olfactory receptor 8B8 from Homo sapiens (Human).